Reading from the N-terminus, the 184-residue chain is Isopentenyl-diphosphate Delta-isomerase (184 aa).

Positions 25 and 32 each coordinate Mn(2+). The Nudix hydrolase domain maps to 30–164 (PLHLAFSCWL…PWAFSPWMVL (135 aa)). Cys-67 is an active-site residue. His-69 contributes to the Mn(2+) binding site. Glu-87 is a binding site for Mg(2+). 2 residues coordinate Mn(2+): Glu-114 and Glu-116. Glu-116 is an active-site residue.

This sequence belongs to the IPP isomerase type 1 family. Homodimer. It depends on Mg(2+) as a cofactor. Mn(2+) serves as cofactor.

The protein localises to the cytoplasm. It carries out the reaction isopentenyl diphosphate = dimethylallyl diphosphate. Its pathway is isoprenoid biosynthesis; dimethylallyl diphosphate biosynthesis; dimethylallyl diphosphate from isopentenyl diphosphate: step 1/1. In terms of biological role, catalyzes the 1,3-allylic rearrangement of the homoallylic substrate isopentenyl (IPP) to its highly electrophilic allylic isomer, dimethylallyl diphosphate (DMAPP). In Klebsiella pneumoniae (strain 342), this protein is Isopentenyl-diphosphate Delta-isomerase.